The sequence spans 343 residues: Geranylgeranyl pyrophosphate synthase 1 (343 aa).

Positions 43, 46, and 75 each coordinate isopentenyl diphosphate. 2 residues coordinate Mg(2+): D82 and D86. R91 lines the dimethylallyl diphosphate pocket. Isopentenyl diphosphate is bound at residue R92. Residues K169, T170, and Q212 each contribute to the dimethylallyl diphosphate site. D215 contributes to the Mg(2+) binding site. Positions 219, 229, and 239 each coordinate dimethylallyl diphosphate.

It belongs to the FPP/GGPP synthase family. It depends on Mg(2+) as a cofactor.

It carries out the reaction isopentenyl diphosphate + dimethylallyl diphosphate = (2E)-geranyl diphosphate + diphosphate. The catalysed reaction is isopentenyl diphosphate + (2E)-geranyl diphosphate = (2E,6E)-farnesyl diphosphate + diphosphate. It catalyses the reaction isopentenyl diphosphate + (2E,6E)-farnesyl diphosphate = (2E,6E,10E)-geranylgeranyl diphosphate + diphosphate. Its function is as follows. Geranylgeranyl pyrophosphate synthase; part of the gene cluster 4 that mediates the biosynthesis of an isoprenoid secondary metabolite. In Zymoseptoria tritici (strain CBS 115943 / IPO323) (Speckled leaf blotch fungus), this protein is Geranylgeranyl pyrophosphate synthase 1 (GGS1).